Consider the following 170-residue polypeptide: Transcription factor E (170 aa).

The HTH TFE/IIEalpha-type domain occupies 1-93 (MKEAYLYIVE…TWYVDDEIIR (93 aa)).

It belongs to the TFE family. In terms of assembly, monomer. Interaction with RNA polymerase subunits RpoF and RpoE is necessary for Tfe stimulatory transcription activity. Able to interact with Tbp and RNA polymerase in the absence of DNA promoter. Interacts both with the preinitiation and elongation complexes.

In terms of biological role, transcription factor that plays a role in the activation of archaeal genes transcribed by RNA polymerase. Facilitates transcription initiation by enhancing TATA-box recognition by TATA-box-binding protein (Tbp), and transcription factor B (Tfb) and RNA polymerase recruitment. Not absolutely required for transcription in vitro, but particularly important in cases where Tbp or Tfb function is not optimal. It dynamically alters the nucleic acid-binding properties of RNA polymerases by stabilizing the initiation complex and destabilizing elongation complexes. Seems to translocate with the RNA polymerase following initiation and acts by binding to the non template strand of the transcription bubble in elongation complexes. The polypeptide is Transcription factor E (Pyrobaculum islandicum (strain DSM 4184 / JCM 9189 / GEO3)).